Here is a 443-residue protein sequence, read N- to C-terminus: Signal recognition particle 54 kDa protein (443 aa).

GTP contacts are provided by residues 107-114, 189-193, and 247-250; these read GVQGSGKT, DTAGR, and TKLD.

The protein belongs to the GTP-binding SRP family. SRP54 subfamily. Part of the signal recognition particle protein translocation system, which is composed of SRP and FtsY. Archaeal SRP consists of a 7S RNA molecule of 300 nucleotides and two protein subunits: SRP54 and SRP19.

The protein localises to the cytoplasm. The enzyme catalyses GTP + H2O = GDP + phosphate + H(+). Functionally, involved in targeting and insertion of nascent membrane proteins into the cytoplasmic membrane. Binds to the hydrophobic signal sequence of the ribosome-nascent chain (RNC) as it emerges from the ribosomes. The SRP-RNC complex is then targeted to the cytoplasmic membrane where it interacts with the SRP receptor FtsY. The protein is Signal recognition particle 54 kDa protein of Pyrococcus horikoshii (strain ATCC 700860 / DSM 12428 / JCM 9974 / NBRC 100139 / OT-3).